The chain runs to 259 residues: ATP synthase subunit a (259 aa).

A propeptide spans 1–7 (MTNNYIN) (removed in mature form). A run of 5 helical transmembrane segments spans residues 36-56 (FSLY…LSIG), 95-115 (YVPL…IGMV), 125-145 (LIYI…LGLF), 164-206 (LVPV…NLVK), and 211-253 (INYF…SYLK).

In terms of assembly, F-type ATP synthases have 2 components, the catalytic core F(1) and the membrane-embedded component F(0), linked together by a central stalk and a peripheral stalk. The central stalk, also called rotor shaft, is often seen as part of F(1). The peripheral stalk is seen as part of F(0). F(0) contains the membrane channel next to the rotor. F-type ATP synthases form dimers but each monomer functions independently in ATP generation. The dimer consists of 18 different polypeptides: ATP1 (subunit alpha, part of F(1), 3 molecules per monomer), ATP2 (subunit beta, part of F(1), 3 molecules per monomer), ATP3 (subunit gamma, part of the central stalk), ATP4 (subunit b, part of the peripheral stalk), ATP5/OSCP (subunit 5/OSCP, part of the peripheral stalk), ATP6 (subunit a, part of the peripheral stalk), ATP7 (subunit d, part of the peripheral stalk), ATP8 (subunit 8, part of the peripheral stalk), OLI1 (subunit c, part of the rotor, 10 molecules per monomer), ATP14 (subunit h, part of the peripheral stalk), ATP15 (subunit epsilon, part of the central stalk), ATP16 (subunit delta, part of the central stalk), ATP17 (subunit f, part of the peripheral stalk), ATP18 (subunit i/j, part of the peripheral stalk). Dimer-specific subunits are ATP19 (subunit k, at interface between monomers), ATP20 (subunit g, at interface between monomers), TIM11 (subunit e, at interface between monomers). Also contains subunit L.

It is found in the mitochondrion inner membrane. Functionally, mitochondrial membrane ATP synthase (F(1)F(0) ATP synthase or Complex V) produces ATP from ADP in the presence of a proton gradient across the membrane which is generated by electron transport complexes of the respiratory chain. F-type ATP synthases consist of two structural domains, F(1) - containing the extramembraneous catalytic core, and F(0) - containing the membrane proton channel, linked together by a central stalk and a peripheral stalk. During catalysis, ATP synthesis in the catalytic domain of F(1) is coupled via a rotary mechanism of the central stalk subunits to proton translocation. Key component of the proton channel; it may play a direct role in the translocation of protons across the membrane. This Pichia angusta (Yeast) protein is ATP synthase subunit a.